A 344-amino-acid chain; its full sequence is Sulfate/thiosulfate import ATP-binding protein CysA (344 aa).

Positions 3-237 constitute an ABC transporter domain; the sequence is IEVRNLVKKF…PATAFVHGFI (235 aa). Residue 35 to 42 participates in ATP binding; it reads GPSGSGKT.

The protein belongs to the ABC transporter superfamily. Sulfate/tungstate importer (TC 3.A.1.6) family. In terms of assembly, the complex is composed of two ATP-binding proteins (CysA), two transmembrane proteins (CysT and CysW) and a solute-binding protein (CysP).

Its subcellular location is the cell inner membrane. It carries out the reaction sulfate(out) + ATP + H2O = sulfate(in) + ADP + phosphate + H(+). It catalyses the reaction thiosulfate(out) + ATP + H2O = thiosulfate(in) + ADP + phosphate + H(+). Part of the ABC transporter complex CysAWTP involved in sulfate/thiosulfate import. Responsible for energy coupling to the transport system. The sequence is that of Sulfate/thiosulfate import ATP-binding protein CysA from Bradyrhizobium diazoefficiens (strain JCM 10833 / BCRC 13528 / IAM 13628 / NBRC 14792 / USDA 110).